Reading from the N-terminus, the 806-residue chain is Facilitated trehalose transporter Tret1 (806 aa).

2 disordered regions span residues 1 to 34 (MFGN…TTGT) and 48 to 138 (LNST…HKNQ). Residues 1 to 339 (MFGNEMDDTR…LEVYRPTTNP (339 aa)) lie on the Cytoplasmic side of the membrane. A compositionally biased stretch (low complexity) spans 25–34 (GSLSTSTTGT). A helical transmembrane segment spans residues 340 to 360 (IFIWTQVLAALSVSLGSMVVG). The Extracellular segment spans residues 361 to 389 (FSSAYTSPALVSMKDRNITSFEVTDQSGS). The N-linked (GlcNAc...) asparagine glycan is linked to Asn-377. Residues 390-410 (WVGGIMPLAGLAGGILGGPLI) form a helical membrane-spanning segment. Residues 411-424 (EYLGRKNTILATAT) lie on the Cytoplasmic side of the membrane. Residues 425 to 445 (PFIISWLLIACATHVAMVLVG) form a helical membrane-spanning segment. The Extracellular portion of the chain corresponds to 446 to 447 (RA). Residues 448-468 (LSGFSVGVASLSLPVYLGETV) form a helical membrane-spanning segment. The Cytoplasmic segment spans residues 469–473 (QPEVR). The chain crosses the membrane as a helical span at residues 474-494 (GTLGLLPTAFGNIGILLCFVA). Over 495–501 (GKYMDWS) the chain is Extracellular. The chain crosses the membrane as a helical span at residues 502–522 (GLAFLGAALPIPFLLLMFLIP). Residues 523-585 (ETPRWYVSRG…DLMKKANLKP (63 aa)) lie on the Cytoplasmic side of the membrane. A helical membrane pass occupies residues 586 to 606 (LLISLGLMFFQQLSGINAVIF). Over 607–622 (YTVQIFQDAGSTIDEN) the chain is Extracellular. Residues 623–643 (LCTIIVGVVNFIATFIATMLI) traverse the membrane as a helical segment. Topologically, residues 644-649 (DRLGRK) are cytoplasmic. The helical transmembrane segment at 650-670 (MLLYISDVAMIITLMTLGGFF) threads the bilayer. The Extracellular portion of the chain corresponds to 671–681 (YVKNSGQDVSQ). Residues 682–702 (VGWLPLAAFVIYVLGFSLGFG) form a helical membrane-spanning segment. Over 703 to 723 (PIPWLMMGEILPGKIRGSAAS) the chain is Cytoplasmic. Residues 724-744 (VATAFNWSCTFIVTKTFADII) form a helical membrane-spanning segment. At 745-750 (NAIGTH) the chain is on the extracellular side. A helical transmembrane segment spans residues 751–771 (GTFWMFGSICVIGLAFVIFYV). At 772–806 (PETQGKSLEDIERKMMGRVRRMSSVANIKPLSFNM) the chain is on the cytoplasmic side.

The protein belongs to the major facilitator superfamily. Sugar transporter (TC 2.A.1.1) family. Trehalose transporter subfamily.

It localises to the cell membrane. Its function is as follows. High-capacity facilitative transporter for trehalose. Does not transport maltose, sucrose or lactose. Mediates the bidirectional transfer of trehalose. Responsible for the transport of trehalose synthesized in the fat body and the incorporation of trehalose into other tissues that require a carbon source, thereby regulating trehalose levels in the hemolymph. The polypeptide is Facilitated trehalose transporter Tret1 (Aedes aegypti (Yellowfever mosquito)).